Consider the following 361-residue polypeptide: Eukaryotic translation initiation factor 3 subunit F (361 aa).

2 stretches are compositionally biased toward low complexity: residues 1–11 (MATPVVSASGP) and 21–42 (AAPASASASVPAPTPAPAAAAV). The disordered stretch occupies residues 1 to 42 (MATPVVSASGPPATPAPAPVAAPASASASVPAPTPAPAAAAV). A2 is subject to N-acetylalanine. Phosphoserine; by CDK11; in vitro is present on S50. Residues 55–78 (AAAATTAAPGQTPASAQAPAQTPA) show a composition bias toward low complexity. Residues 55 to 86 (AAAATTAAPGQTPASAQAPAQTPAPALPGPAL) are disordered. In terms of domain architecture, MPN spans 96–226 (VRLHPVILAS…IKAYVSTLMG (131 aa)). An N6-acetyllysine modification is found at K242. S262 bears the Phosphoserine mark.

It belongs to the eIF-3 subunit F family. Component of the eukaryotic translation initiation factor 3 (eIF-3) complex, which is composed of 13 subunits: EIF3A, EIF3B, EIF3C, EIF3D, EIF3E, EIF3F, EIF3G, EIF3H, EIF3I, EIF3J, EIF3K, EIF3L and EIF3M. The eIF-3 complex appears to include 3 stable modules: module A is composed of EIF3A, EIF3B, EIF3G and EIF3I; module B is composed of EIF3F, EIF3H, and EIF3M; and module C is composed of EIF3C, EIF3D, EIF3E, EIF3K and EIF3L. EIF3C of module C binds EIF3B of module A and EIF3H of module B, thereby linking the three modules. EIF3J is a labile subunit that binds to the eIF-3 complex via EIF3B. The eIF-3 complex interacts with RPS6KB1 under conditions of nutrient depletion. Mitogenic stimulation leads to binding and activation of a complex composed of MTOR and RPTOR, leading to phosphorylation and release of RPS6KB1 and binding of EIF4B to eIF-3. Interacts with RNF139; the interaction leads to protein translation inhibitions in a ubiquitination-dependent manner. Interacts with DTX1, the interaction is required for deubiquitinating activity towards NOTCH1. Phosphorylation is enhanced upon serum stimulation. Phosphorylated during apoptosis by caspase-processed CDK11.

The protein localises to the cytoplasm. It catalyses the reaction Thiol-dependent hydrolysis of ester, thioester, amide, peptide and isopeptide bonds formed by the C-terminal Gly of ubiquitin (a 76-residue protein attached to proteins as an intracellular targeting signal).. In terms of biological role, component of the eukaryotic translation initiation factor 3 (eIF-3) complex, which is required for several steps in the initiation of protein synthesis. The eIF-3 complex associates with the 40S ribosome and facilitates the recruitment of eIF-1, eIF-1A, eIF-2:GTP:methionyl-tRNAi and eIF-5 to form the 43S pre-initiation complex (43S PIC). The eIF-3 complex stimulates mRNA recruitment to the 43S PIC and scanning of the mRNA for AUG recognition. The eIF-3 complex is also required for disassembly and recycling of post-termination ribosomal complexes and subsequently prevents premature joining of the 40S and 60S ribosomal subunits prior to initiation. The eIF-3 complex specifically targets and initiates translation of a subset of mRNAs involved in cell proliferation, including cell cycling, differentiation and apoptosis, and uses different modes of RNA stem-loop binding to exert either translational activation or repression. Deubiquitinates activated NOTCH1, promoting its nuclear import, thereby acting as a positive regulator of Notch signaling. This Macaca fascicularis (Crab-eating macaque) protein is Eukaryotic translation initiation factor 3 subunit F.